A 256-amino-acid polypeptide reads, in one-letter code: 5'-nucleotidase SurE (256 aa).

4 residues coordinate a divalent metal cation: Asp-8, Asp-9, Ser-40, and Asn-92.

The protein belongs to the SurE nucleotidase family. A divalent metal cation serves as cofactor.

Its subcellular location is the cytoplasm. It catalyses the reaction a ribonucleoside 5'-phosphate + H2O = a ribonucleoside + phosphate. Functionally, nucleotidase that shows phosphatase activity on nucleoside 5'-monophosphates. The protein is 5'-nucleotidase SurE of Rhizobium meliloti (strain 1021) (Ensifer meliloti).